Consider the following 153-residue polypeptide: Large ribosomal subunit protein uL15 (153 aa).

The interval 1–48 (MRLNELSPAPGSKKDRKRVGRGDAGRGNYSGRGMKGQKARSGGATRPG) is disordered.

This sequence belongs to the universal ribosomal protein uL15 family. As to quaternary structure, part of the 50S ribosomal subunit.

Binds to the 23S rRNA. This chain is Large ribosomal subunit protein uL15, found in Dehalococcoides mccartyi (strain ATCC BAA-2266 / KCTC 15142 / 195) (Dehalococcoides ethenogenes (strain 195)).